A 398-amino-acid chain; its full sequence is S-adenosylmethionine synthase (398 aa).

Histidine 19 lines the ATP pocket. Aspartate 21 contacts Mg(2+). K(+) is bound at residue glutamate 47. Glutamate 60 and glutamine 103 together coordinate L-methionine. The segment at 103–113 (QSPDIAQGVDV) is flexible loop. Residues 177–179 (DGK), 243–244 (RF), aspartate 252, 258–259 (RK), alanine 275, and lysine 279 contribute to the ATP site. Aspartate 252 lines the L-methionine pocket. Position 283 (lysine 283) interacts with L-methionine.

Belongs to the AdoMet synthase family. Homotetramer; dimer of dimers. It depends on Mg(2+) as a cofactor. K(+) is required as a cofactor.

It is found in the cytoplasm. The enzyme catalyses L-methionine + ATP + H2O = S-adenosyl-L-methionine + phosphate + diphosphate. It functions in the pathway amino-acid biosynthesis; S-adenosyl-L-methionine biosynthesis; S-adenosyl-L-methionine from L-methionine: step 1/1. Its function is as follows. Catalyzes the formation of S-adenosylmethionine (AdoMet) from methionine and ATP. The overall synthetic reaction is composed of two sequential steps, AdoMet formation and the subsequent tripolyphosphate hydrolysis which occurs prior to release of AdoMet from the enzyme. In Symbiobacterium thermophilum (strain DSM 24528 / JCM 14929 / IAM 14863 / T), this protein is S-adenosylmethionine synthase.